A 371-amino-acid polypeptide reads, in one-letter code: Cysteine proteinase EP-B 1 (371 aa).

Positions methionine 1–alanine 28 are cleaved as a signal peptide. The propeptide at isoleucine 29–aspartate 133 is activation peptide. The N-linked (GlcNAc...) asparagine glycan is linked to asparagine 130. 3 disulfides stabilise this stretch: cysteine 155/cysteine 197, cysteine 189/cysteine 230, and cysteine 291/cysteine 343. Residue cysteine 158 is part of the active site. Residues histidine 297 and asparagine 318 contribute to the active site.

Belongs to the peptidase C1 family.

The protein is Cysteine proteinase EP-B 1 of Hordeum vulgare (Barley).